We begin with the raw amino-acid sequence, 218 residues long: ATP phosphoribosyltransferase (218 aa).

Belongs to the ATP phosphoribosyltransferase family. Short subfamily. As to quaternary structure, heteromultimer composed of HisG and HisZ subunits.

Its subcellular location is the cytoplasm. The enzyme catalyses 1-(5-phospho-beta-D-ribosyl)-ATP + diphosphate = 5-phospho-alpha-D-ribose 1-diphosphate + ATP. Its pathway is amino-acid biosynthesis; L-histidine biosynthesis; L-histidine from 5-phospho-alpha-D-ribose 1-diphosphate: step 1/9. Functionally, catalyzes the condensation of ATP and 5-phosphoribose 1-diphosphate to form N'-(5'-phosphoribosyl)-ATP (PR-ATP). Has a crucial role in the pathway because the rate of histidine biosynthesis seems to be controlled primarily by regulation of HisG enzymatic activity. This is ATP phosphoribosyltransferase from Trichormus variabilis (strain ATCC 29413 / PCC 7937) (Anabaena variabilis).